The primary structure comprises 563 residues: Arginine--tRNA ligase (563 aa).

Residues Pro121 to His131 carry the 'HIGH' region motif.

This sequence belongs to the class-I aminoacyl-tRNA synthetase family. In terms of assembly, monomer.

Its subcellular location is the cytoplasm. The enzyme catalyses tRNA(Arg) + L-arginine + ATP = L-arginyl-tRNA(Arg) + AMP + diphosphate. The chain is Arginine--tRNA ligase from Streptococcus mutans serotype c (strain ATCC 700610 / UA159).